Consider the following 474-residue polypeptide: Trehalose-6-phosphate synthase (474 aa).

A D-glucose 6-phosphate-binding site is contributed by Arg10. Residue 22–23 participates in UDP-alpha-D-glucose binding; it reads GG. Residues Tyr77 and Asp131 each contribute to the D-glucose 6-phosphate site. Residues Arg263 and Lys268 each contribute to the UDP-alpha-D-glucose site. A D-glucose 6-phosphate-binding site is contributed by Arg301. UDP-alpha-D-glucose is bound by residues Phe340 and 366 to 370; that span reads LVAKE.

It belongs to the glycosyltransferase 20 family. As to quaternary structure, homotetramer.

The enzyme catalyses D-glucose 6-phosphate + UDP-alpha-D-glucose = alpha,alpha-trehalose 6-phosphate + UDP + H(+). Its pathway is glycan biosynthesis; trehalose biosynthesis. In terms of biological role, probably involved in the osmoprotection via the biosynthesis of trehalose. Catalyzes the transfer of glucose from UDP-alpha-D-glucose (UDP-Glc) to D-glucose 6-phosphate (Glc-6-P) to form trehalose-6-phosphate. Acts with retention of the anomeric configuration of the UDP-sugar donor. The chain is Trehalose-6-phosphate synthase from Escherichia coli O9:H4 (strain HS).